Consider the following 866-residue polypeptide: MAAVDSDVVSLPRGRFRCCLCDVTTANRPSLDAHLKGRKHRDLVQLRATRKAQGLRSVFVSGFPRDVGSAQLSEYFQTFGPVANIVMDKDKGVFAIVEMGDISAREAVLSQPKHSLGGHTLRVRPREQKEFQSPASKSPKGVDSNSHQLAQALAEAADVGAQMVKLVELRELSEAERQLRTLVVALMQEVFTEFFPGCVVHPFGSSVNSFDVHGCDLDLFLDLGDMEEPQPDPQTPKLPEASSLDSTLASSLDPQVLACTPASLDSLSPTSLQDSEALDFETPSSLAPQTPDSALGSDTVTSPQSLPPVSPLEEDRGEGKHRKELELAEASKDEKEEATAVLELVGSILRGCVPGVYRVQTVPSARRPVVKFCHRPSGLHGDISLSNRLALYNSRFLNLCSEMDSRVRPLVYTLRCWAQHNGLSGGGPLLNNYALTLLVIYFLQTRDPPVLPTVAQLTQRSGEGEQVEVDGWDCSFPKDASRLEPSTNVEPLSSLLAQFFSCVSCWDLSGSLLSLREGQALMVAGGLPSDLWEGLRLGPMNLQDPFDLSHNVAANVTSRVAKRLQSSCGAAASYCRSLQYQQRSSRGRDWGLLPLLQPSSPSSLLSAKLIPLPSAPFPQIITALVSVLREALGCHIEQGTKRRRSEGARSKDSPLGGANKRPRLSGQEKSCEEGKEEPQGCAGDHSENEVEEMVIELRETPQDWALLHCGPPGELPLMTAKCLDKTAEQNPMEPEGAGEGSPGETEKEASHPSSVSWRCALWHQIWQGRRRARRRFQQQTKEEGRGGPSTGAEWLAVEARVTQELKGPKSEQQRLQGEPLLTFVASASQAEQTLTVAPLQDPQGLFPGLHHFLQVFIPQALKNLLK.

The Matrin-type zinc finger occupies 16–46; it reads FRCCLCDVTTANRPSLDAHLKGRKHRDLVQL. The RRM domain maps to 56 to 128; sequence RSVFVSGFPR…HTLRVRPREQ (73 aa). The interval 116–147 is disordered; that stretch reads LGGHTLRVRPREQKEFQSPASKSPKGVDSNSH. Ser-205 contacts ATP. Positions 216 and 218 each coordinate Mg(2+). UTP is bound by residues Asp-216 and Asp-218. Disordered stretches follow at residues 223-249 and 267-321; these read LGDM…STLA and LSPT…EGKH. Residues 282–304 show a composition bias toward polar residues; sequence TPSSLAPQTPDSALGSDTVTSPQ. Residue Asn-393 participates in ATP binding. Residues Asn-393, Arg-415, Tyr-433, and His-550 each contribute to the UTP site. The PAP-associated domain maps to 492–550; the sequence is LSSLLAQFFSCVSCWDLSGSLLSLREGQALMVAGGLPSDLWEGLRLGPMNLQDPFDLSH. Residues 599–866 form a KA1; binds the bulging loops of U6 snRNA but is dispensable for terminal uridylyltransferase activity region; that stretch reads SSPSSLLSAK…IPQALKNLLK (268 aa). 3 disordered regions span residues 638–687, 728–755, and 773–792; these read QGTK…DHSE, EQNP…PSSV, and RRRF…STGA. The span at 669–687 shows a compositional bias: basic and acidic residues; sequence KSCEEGKEEPQGCAGDHSE. A phosphoserine mark is found at Ser-686 and Ser-741.

This sequence belongs to the DNA polymerase type-B-like family. In terms of assembly, associates with the cleavage and polyadenylation specificity factor (CPSF) complex. Interacts with CPSF1 and CPSF3; the interaction is direct. Interacts with PIP5K1A. Mg(2+) serves as cofactor. It depends on Mn(2+) as a cofactor. Phosphorylated by CK1 in the proline-rich (Pro-rich) region.

The protein localises to the nucleus. It is found in the nucleolus. It localises to the nucleus speckle. The enzyme catalyses RNA(n) + UTP = RNA(n)-3'-uridine ribonucleotide + diphosphate. The catalysed reaction is RNA(n) + ATP = RNA(n)-3'-adenine ribonucleotide + diphosphate. Adenylyltransferase activity is specifically phosphatidylinositol 4,5-bisphosphate (PtdIns(4,5)P2). Poly(A) polymerase that creates the 3'-poly(A) tail of specific pre-mRNAs. Localizes to nuclear speckles together with PIP5K1A and mediates polyadenylation of a select set of mRNAs, such as HMOX1. In addition to polyadenylation, it is also required for the 3'-end cleavage of pre-mRNAs: binds to the 3'UTR of targeted pre-mRNAs and promotes the recruitment and assembly of the CPSF complex on the 3'UTR of pre-mRNAs. In addition to adenylyltransferase activity, also has uridylyltransferase activity. However, the ATP ratio is higher than UTP in cells, suggesting that it functions primarily as a poly(A) polymerase. Acts as a specific terminal uridylyltransferase for U6 snRNA in vitro: responsible for a controlled elongation reaction that results in the restoration of the four 3'-terminal UMP-residues found in newly transcribed U6 snRNA. Not involved in replication-dependent histone mRNA degradation. This Rattus norvegicus (Rat) protein is Speckle targeted PIP5K1A-regulated poly(A) polymerase (Tut1).